We begin with the raw amino-acid sequence, 1537 residues long: DNA excision repair protein ERCC-6-like 2 (1537 aa).

The Helicase ATP-binding domain maps to Tyr134–Gly319. Asp147–Thr154 contributes to the ATP binding site. A DEAH box motif is present at residues Asp270 to His273. The region spanning Val510–Lys660 is the Helicase C-terminal domain. Disordered stretches follow at residues Lys715–Thr735 and Ser749–Thr768. Over residues Gly755–Asp764 the composition is skewed to basic and acidic residues. The Atypical PIP-box motif lies at Pro772–Ser783. 3 disordered regions span residues Lys791–Pro811, Ser833–Asp891, and Glu918–Leu948. Basic and acidic residues predominate over residues Glu834–Leu857. Residues Ser968 and Ser971 each carry the phosphoserine modification. The segment at Val1274 to Asp1306 is disordered. Residues Lys1276 to Leu1292 are compositionally biased toward basic and acidic residues. Residues Asn1295–Asp1306 show a composition bias toward polar residues.

This sequence belongs to the SNF2/RAD54 helicase family. Interacts with NEK6. Interacts (via an atypical PIP-box) with PCNA; this interaction facilitates cenrtomeric localization of ERCC6L2. Interacts with CYREN; this interaction is DNA independent. Interacts with XRCC6 and XRCC5. In terms of processing, phosphorylated by NEK6.

The protein resides in the nucleus. The protein localises to the cytoplasm. Its subcellular location is the cytoskeleton. It localises to the microtubule organizing center. It is found in the centrosome. The protein resides in the mitochondrion. The protein localises to the chromosome. Its subcellular location is the centromere. In terms of biological role, promotes double-strand break (DSB) end-joining and facilitates programmed recombination by controlling how DNA ends are joined in a spatially oriented manner during repair. Also plays a role in DNA repair by restricting DNA end resection in double strand break (DSB) repair. Facilitates replication of complex DNA regions and regulates the maintenance of chromatin structure. This Mus musculus (Mouse) protein is DNA excision repair protein ERCC-6-like 2.